Here is a 341-residue protein sequence, read N- to C-terminus: Glyceraldehyde-3-phosphate dehydrogenase, cytosolic (341 aa).

NAD(+) is bound by residues R14–I15 and D36. D-glyceraldehyde 3-phosphate is bound by residues S153–T155, T184, T213–G214, and R236. The active-site Nucleophile is C154. N318 is a binding site for NAD(+).

Belongs to the glyceraldehyde-3-phosphate dehydrogenase family. In terms of assembly, homotetramer.

The protein resides in the cytoplasm. It carries out the reaction D-glyceraldehyde 3-phosphate + phosphate + NAD(+) = (2R)-3-phospho-glyceroyl phosphate + NADH + H(+). The protein operates within carbohydrate degradation; glycolysis; pyruvate from D-glyceraldehyde 3-phosphate: step 1/5. Key enzyme in glycolysis that catalyzes the first step of the pathway by converting D-glyceraldehyde 3-phosphate (G3P) into 3-phospho-D-glyceroyl phosphate. Essential for the maintenance of cellular ATP levels and carbohydrate metabolism. The polypeptide is Glyceraldehyde-3-phosphate dehydrogenase, cytosolic (GAPC) (Chlamydomonas reinhardtii (Chlamydomonas smithii)).